The primary structure comprises 295 residues: Pyridoxal 5'-phosphate synthase subunit PdxS (295 aa).

D25 contacts D-ribose 5-phosphate. K82 (schiff-base intermediate with D-ribose 5-phosphate) is an active-site residue. D-ribose 5-phosphate is bound at residue G154. R166 is a binding site for D-glyceraldehyde 3-phosphate. D-ribose 5-phosphate is bound by residues G215 and 236–237 (GS).

This sequence belongs to the PdxS/SNZ family. In the presence of PdxT, forms a dodecamer of heterodimers.

The enzyme catalyses aldehydo-D-ribose 5-phosphate + D-glyceraldehyde 3-phosphate + L-glutamine = pyridoxal 5'-phosphate + L-glutamate + phosphate + 3 H2O + H(+). It participates in cofactor biosynthesis; pyridoxal 5'-phosphate biosynthesis. Catalyzes the formation of pyridoxal 5'-phosphate from ribose 5-phosphate (RBP), glyceraldehyde 3-phosphate (G3P) and ammonia. The ammonia is provided by the PdxT subunit. Can also use ribulose 5-phosphate and dihydroxyacetone phosphate as substrates, resulting from enzyme-catalyzed isomerization of RBP and G3P, respectively. The chain is Pyridoxal 5'-phosphate synthase subunit PdxS from Shouchella clausii (strain KSM-K16) (Alkalihalobacillus clausii).